The following is an 857-amino-acid chain: MSDQRKGITFDGETFTFPETNDMVKTLFDPTVHKSACELIIVTLLVMNSLVFYSVSNNQSRINIFVGMYIFWRLCYNFGIGFLLNQQSNRFRLVKISEKMRLFDKGNKSFWARCVQTEVQSQMGPSYSISAHPVAFNTWLIFRKVVDLILMEDFITFMCVVVACAIDSDYQFLHGQPVWLTTLRLVIGSILIVFNFWVKVNAHNTIKDYAWYWGDFFFRQINNDDLIFDGVFEMFPHPMYSAGYVGYYGFALIAKSYTVLIVAVFGHFLQMVFLHLVENPHIDKIYGPPPNETSLKKLVKLKDLSFFDNVAPLVGLVNFNILRASDIINLLNCLTYAVAIPTVSSLATYNIEAMGKVLFCIAILIKGFESFVINGVLLLQSNYKTISEWYLANNLPVENSLNNFAVLYNSLINLTYSSFVGMNVFKLLTKLKYQDLIITGHIYLRIFLGLLLIITQVMINTSIVDSIGYFGWFYGDFFIPKASVLPQRAHLSKGGVYRYLNNPEQIFGVCGVMGVTMIVPTYDNFMICLLWMLNNFFRINFVERSHMIKIYGEREVSQDSGVMKTVKKHLLPESIQKKFEVSPTNEPKKRTNSVFIESFDSFIKELRSKNTSPVVSKERLAEMSQNEFFSGSDYCLEIEGLEDSSFVPHSFIGEPIEVKFRAPAKHSPKDWVGLYKVAHTSFSRYRTLVSSNNRWDWTGPEEQGTIVFSKEKLFCEEGLYEFRYHLDGKHDVAFISAPFEIKLRHIEVPLESAEADELANQLRKYIFDHVVSGVDDNETPIFVGISQTQDIVATYEHIAMLITKSTGVKVGKRFLIYNDNETGNKFTVGDLASRLINIKKVMHELEGDEYLRIKKLE.

Over 1–34 the chain is Lumenal; sequence MSDQRKGITFDGETFTFPETNDMVKTLFDPTVHK. The chain crosses the membrane as a helical span at residues 35–55; the sequence is SACELIIVTLLVMNSLVFYSV. Residues 56–63 lie on the Cytoplasmic side of the membrane; it reads SNNQSRIN. A helical transmembrane segment spans residues 64 to 84; sequence IFVGMYIFWRLCYNFGIGFLL. At 85 to 145 the chain is on the lumenal side; it reads NQQSNRFRLV…FNTWLIFRKV (61 aa). Residues 146–166 form a helical membrane-spanning segment; sequence VDLILMEDFITFMCVVVACAI. Topologically, residues 167-177 are cytoplasmic; it reads DSDYQFLHGQP. A helical membrane pass occupies residues 178 to 198; sequence VWLTTLRLVIGSILIVFNFWV. The Lumenal segment spans residues 199-233; it reads KVNAHNTIKDYAWYWGDFFFRQINNDDLIFDGVFE. The helical transmembrane segment at 234–254 threads the bilayer; that stretch reads MFPHPMYSAGYVGYYGFALIA. At 255–256 the chain is on the cytoplasmic side; the sequence is KS. A helical transmembrane segment spans residues 257-277; that stretch reads YTVLIVAVFGHFLQMVFLHLV. Residues 278–326 are Lumenal-facing; that stretch reads ENPHIDKIYGPPPNETSLKKLVKLKDLSFFDNVAPLVGLVNFNILRASD. The chain crosses the membrane as a helical span at residues 327–347; that stretch reads IINLLNCLTYAVAIPTVSSLA. Topologically, residues 348 to 356 are cytoplasmic; it reads TYNIEAMGK. The helical transmembrane segment at 357–377 threads the bilayer; it reads VLFCIAILIKGFESFVINGVL. The Lumenal portion of the chain corresponds to 378–403; that stretch reads LLQSNYKTISEWYLANNLPVENSLNN. A helical transmembrane segment spans residues 404–424; that stretch reads FAVLYNSLINLTYSSFVGMNV. Residues 425–436 lie on the Cytoplasmic side of the membrane; that stretch reads FKLLTKLKYQDL. The chain crosses the membrane as a helical span at residues 437 to 457; sequence IITGHIYLRIFLGLLLIITQV. Residues 458–511 are Lumenal-facing; that stretch reads MINTSIVDSIGYFGWFYGDFFIPKASVLPQRAHLSKGGVYRYLNNPEQIFGVCG. The chain crosses the membrane as a helical span at residues 512–532; sequence VMGVTMIVPTYDNFMICLLWM. Over 533–857 the chain is Cytoplasmic; that stretch reads LNNFFRINFV…DEYLRIKKLE (325 aa).

The protein belongs to the class VI-like SAM-binding methyltransferase superfamily. CHO2 family.

It localises to the endoplasmic reticulum membrane. The catalysed reaction is a 1,2-diacyl-sn-glycero-3-phosphoethanolamine + S-adenosyl-L-methionine = a 1,2-diacyl-sn-glycero-3-phospho-N-methylethanolamine + S-adenosyl-L-homocysteine + H(+). Its pathway is phospholipid metabolism; phosphatidylcholine biosynthesis. Catalyzes the first step of the methylation pathway of phosphatidylcholine biosynthesis, the SAM-dependent methylation of phosphatidylethanolamine (PE) to phosphatidylmonomethylethanolamine (PMME). This Clavispora lusitaniae (strain ATCC 42720) (Yeast) protein is Phosphatidylethanolamine N-methyltransferase (CHO2).